Here is a 234-residue protein sequence, read N- to C-terminus: tRNA (guanine-N(1)-)-methyltransferase (234 aa).

S-adenosyl-L-methionine contacts are provided by residues glycine 112 and isoleucine 132 to leucine 137.

Belongs to the RNA methyltransferase TrmD family. In terms of assembly, homodimer.

Its subcellular location is the cytoplasm. It carries out the reaction guanosine(37) in tRNA + S-adenosyl-L-methionine = N(1)-methylguanosine(37) in tRNA + S-adenosyl-L-homocysteine + H(+). Its function is as follows. Specifically methylates guanosine-37 in various tRNAs. This is tRNA (guanine-N(1)-)-methyltransferase from Campylobacter jejuni subsp. jejuni serotype O:6 (strain 81116 / NCTC 11828).